A 341-amino-acid chain; its full sequence is Holliday junction branch migration complex subunit RuvB (341 aa).

The interval 4 to 185 (TDRLIVPTAV…FGIVARLEFY (182 aa)) is large ATPase domain (RuvB-L). Residues Leu24, Arg25, Gly66, Lys69, Thr70, Thr71, 132–134 (EDF), Arg175, Tyr185, and Arg222 contribute to the ATP site. Mg(2+) is bound at residue Thr70. A small ATPAse domain (RuvB-S) region spans residues 186 to 256 (SAEELGYIVH…VADAALVMLD (71 aa)). The tract at residues 259–341 (RAGLDVMDRK…ATPASDAELF (83 aa)) is head domain (RuvB-H). DNA-binding residues include Arg295, Arg314, and Arg319.

Belongs to the RuvB family. In terms of assembly, homohexamer. Forms an RuvA(8)-RuvB(12)-Holliday junction (HJ) complex. HJ DNA is sandwiched between 2 RuvA tetramers; dsDNA enters through RuvA and exits via RuvB. An RuvB hexamer assembles on each DNA strand where it exits the tetramer. Each RuvB hexamer is contacted by two RuvA subunits (via domain III) on 2 adjacent RuvB subunits; this complex drives branch migration. In the full resolvosome a probable DNA-RuvA(4)-RuvB(12)-RuvC(2) complex forms which resolves the HJ.

It localises to the cytoplasm. The catalysed reaction is ATP + H2O = ADP + phosphate + H(+). The RuvA-RuvB-RuvC complex processes Holliday junction (HJ) DNA during genetic recombination and DNA repair, while the RuvA-RuvB complex plays an important role in the rescue of blocked DNA replication forks via replication fork reversal (RFR). RuvA specifically binds to HJ cruciform DNA, conferring on it an open structure. The RuvB hexamer acts as an ATP-dependent pump, pulling dsDNA into and through the RuvAB complex. RuvB forms 2 homohexamers on either side of HJ DNA bound by 1 or 2 RuvA tetramers; 4 subunits per hexamer contact DNA at a time. Coordinated motions by a converter formed by DNA-disengaged RuvB subunits stimulates ATP hydrolysis and nucleotide exchange. Immobilization of the converter enables RuvB to convert the ATP-contained energy into a lever motion, pulling 2 nucleotides of DNA out of the RuvA tetramer per ATP hydrolyzed, thus driving DNA branch migration. The RuvB motors rotate together with the DNA substrate, which together with the progressing nucleotide cycle form the mechanistic basis for DNA recombination by continuous HJ branch migration. Branch migration allows RuvC to scan DNA until it finds its consensus sequence, where it cleaves and resolves cruciform DNA. This chain is Holliday junction branch migration complex subunit RuvB, found in Thiobacillus denitrificans (strain ATCC 25259 / T1).